Here is a 257-residue protein sequence, read N- to C-terminus: Thiazole synthase (257 aa).

Residue Lys-97 is the Schiff-base intermediate with DXP of the active site. 1-deoxy-D-xylulose 5-phosphate-binding positions include Gly-158, 184 to 185 (AG), and 206 to 207 (NT).

The protein belongs to the ThiG family. As to quaternary structure, homotetramer. Forms heterodimers with either ThiH or ThiS.

It is found in the cytoplasm. The catalysed reaction is [ThiS sulfur-carrier protein]-C-terminal-Gly-aminoethanethioate + 2-iminoacetate + 1-deoxy-D-xylulose 5-phosphate = [ThiS sulfur-carrier protein]-C-terminal Gly-Gly + 2-[(2R,5Z)-2-carboxy-4-methylthiazol-5(2H)-ylidene]ethyl phosphate + 2 H2O + H(+). The protein operates within cofactor biosynthesis; thiamine diphosphate biosynthesis. In terms of biological role, catalyzes the rearrangement of 1-deoxy-D-xylulose 5-phosphate (DXP) to produce the thiazole phosphate moiety of thiamine. Sulfur is provided by the thiocarboxylate moiety of the carrier protein ThiS. In vitro, sulfur can be provided by H(2)S. The sequence is that of Thiazole synthase from Phocaeicola vulgatus (strain ATCC 8482 / DSM 1447 / JCM 5826 / CCUG 4940 / NBRC 14291 / NCTC 11154) (Bacteroides vulgatus).